We begin with the raw amino-acid sequence, 282 residues long: Undecaprenyl-diphosphatase (282 aa).

Helical transmembrane passes span 6–26 (LYFV…FIPV), 45–65 (SGKV…MWIF), 85–105 (LFTR…AIFI), 112–132 (FYHP…MLWV), 200–220 (ATEF…VYDM), 230–250 (HDLG…LLVV), and 262–282 (YRGF…WLAF).

The protein belongs to the UppP family.

The protein localises to the cell inner membrane. The enzyme catalyses di-trans,octa-cis-undecaprenyl diphosphate + H2O = di-trans,octa-cis-undecaprenyl phosphate + phosphate + H(+). Functionally, catalyzes the dephosphorylation of undecaprenyl diphosphate (UPP). Confers resistance to bacitracin. In Bordetella avium (strain 197N), this protein is Undecaprenyl-diphosphatase.